Here is a 216-residue protein sequence, read N- to C-terminus: MTNITSVNTLVSASKLTCIREERILFDELSFDINAGDIIQIEGPNGAGKTSLLRILAGLSRPYAGQTFYLNEDINRCRDEYNEDLLYLGHLAGVKSELTAEENLNFNLRISGYDDFDTAAILAKVNLAGFEEALAGHLSAGQHRRTALARLWHNDCKVWILDEPFTAIDKKGVEELEQLFIQHADNGGCVILTTHQDMGIIKDDRLRKIRLDYRFV.

In terms of domain architecture, ABC transporter spans V11–V216. Position 43–50 (G43–T50) interacts with ATP.

Belongs to the ABC transporter superfamily. CcmA exporter (TC 3.A.1.107) family. In terms of assembly, the complex is composed of two ATP-binding proteins (CcmA) and two transmembrane proteins (CcmB).

Its subcellular location is the cell inner membrane. The enzyme catalyses heme b(in) + ATP + H2O = heme b(out) + ADP + phosphate + H(+). Functionally, part of the ABC transporter complex CcmAB involved in the biogenesis of c-type cytochromes; once thought to export heme, this seems not to be the case, but its exact role is uncertain. Responsible for energy coupling to the transport system. This is Cytochrome c biogenesis ATP-binding export protein CcmA from Shewanella sp. (strain MR-4).